The primary structure comprises 488 residues: ATP synthase subunit beta (488 aa).

ATP is bound at residue 164–171; it reads GGAGVGKT.

Belongs to the ATPase alpha/beta chains family. In terms of assembly, F-type ATPases have 2 components, CF(1) - the catalytic core - and CF(0) - the membrane proton channel. CF(1) has five subunits: alpha(3), beta(3), gamma(1), delta(1), epsilon(1). CF(0) has four main subunits: a(1), b(1), b'(1) and c(9-12).

It localises to the cellular thylakoid membrane. It catalyses the reaction ATP + H2O + 4 H(+)(in) = ADP + phosphate + 5 H(+)(out). In terms of biological role, produces ATP from ADP in the presence of a proton gradient across the membrane. The catalytic sites are hosted primarily by the beta subunits. The sequence is that of ATP synthase subunit beta from Prochlorococcus marinus (strain SARG / CCMP1375 / SS120).